The chain runs to 433 residues: Tol-Pal system protein TolB (433 aa).

Residues 1 to 21 (MINLFRGLLVVLCFASAMVAA) form the signal peptide.

The protein belongs to the TolB family. In terms of assembly, the Tol-Pal system is composed of five core proteins: the inner membrane proteins TolA, TolQ and TolR, the periplasmic protein TolB and the outer membrane protein Pal. They form a network linking the inner and outer membranes and the peptidoglycan layer.

It is found in the periplasm. Functionally, part of the Tol-Pal system, which plays a role in outer membrane invagination during cell division and is important for maintaining outer membrane integrity. The chain is Tol-Pal system protein TolB from Pseudomonas syringae pv. tomato (strain ATCC BAA-871 / DC3000).